The chain runs to 361 residues: Mycothiol acetyltransferase (361 aa).

N-acetyltransferase domains are found at residues 25-173 (PRVR…LPGS) and 195-361 (VTVL…AWKF). Position 59 (Glu-59) interacts with 1D-myo-inositol 2-(L-cysteinylamino)-2-deoxy-alpha-D-glucopyranoside. 98-100 (LAV) is an acetyl-CoA binding site. The 1D-myo-inositol 2-(L-cysteinylamino)-2-deoxy-alpha-D-glucopyranoside site is built by Glu-229, Lys-280, and Glu-295. Acetyl-CoA-binding positions include 299–301 (IGL) and 306–312 (QGRGLGR). Tyr-333 lines the 1D-myo-inositol 2-(L-cysteinylamino)-2-deoxy-alpha-D-glucopyranoside pocket. 338–343 (NAPAVH) is a binding site for acetyl-CoA.

This sequence belongs to the acetyltransferase family. MshD subfamily. Monomer.

It catalyses the reaction 1D-myo-inositol 2-(L-cysteinylamino)-2-deoxy-alpha-D-glucopyranoside + acetyl-CoA = mycothiol + CoA + H(+). Functionally, catalyzes the transfer of acetyl from acetyl-CoA to desacetylmycothiol (Cys-GlcN-Ins) to form mycothiol. This Corynebacterium kroppenstedtii (strain DSM 44385 / JCM 11950 / CIP 105744 / CCUG 35717) protein is Mycothiol acetyltransferase.